Here is a 132-residue protein sequence, read N- to C-terminus: NADPH-dependent 7-cyano-7-deazaguanine reductase (132 aa).

The Thioimide intermediate role is filled by Cys-34. Asp-41 acts as the Proton donor in catalysis. Residues 56 to 58 (IEL) and 75 to 76 (HE) each bind substrate.

This sequence belongs to the GTP cyclohydrolase I family. QueF type 1 subfamily.

The protein resides in the cytoplasm. The catalysed reaction is 7-aminomethyl-7-carbaguanine + 2 NADP(+) = 7-cyano-7-deazaguanine + 2 NADPH + 3 H(+). It functions in the pathway tRNA modification; tRNA-queuosine biosynthesis. Functionally, catalyzes the NADPH-dependent reduction of 7-cyano-7-deazaguanine (preQ0) to 7-aminomethyl-7-deazaguanine (preQ1). This is NADPH-dependent 7-cyano-7-deazaguanine reductase from Vesicomyosocius okutanii subsp. Calyptogena okutanii (strain HA).